The sequence spans 238 residues: Photosynthetic NDH subunit of lumenal location 1, chloroplastic (238 aa).

Belongs to the PsbP family. As to quaternary structure, part of the chloroplast NDH complex, composed of a mixture of chloroplast and nucleus encoded subunits. Component of the NDH lumenal subcomplex, at least composed of PnsL1, PnsL2, PnsL3, PnsL4 and PnsL5.

The protein localises to the plastid. The protein resides in the chloroplast thylakoid membrane. Its function is as follows. NDH shuttles electrons from NAD(P)H:plastoquinone, via FMN and iron-sulfur (Fe-S) centers, to quinones in the photosynthetic chain and possibly in a chloroplast respiratory chain. The immediate electron acceptor for the enzyme in this species is believed to be plastoquinone. Couples the redox reaction to proton translocation, and thus conserves the redox energy in a proton gradient. Required for accumulation of the chloroplast NAD(P)H dehydrogenase (NDH) complex. The polypeptide is Photosynthetic NDH subunit of lumenal location 1, chloroplastic (Arabidopsis thaliana (Mouse-ear cress)).